The primary structure comprises 837 residues: Striatin-interacting protein 1 (837 aa).

An N-acetylmethionine modification is found at M1. The interval 1-67 is disordered; the sequence is MEPAAGTPGP…DSEGYSESPD (67 aa). The span at 18-35 shows a compositional bias: pro residues; it reads PQPPPPPPPATAQPPPGA. Residues 47-60 show a composition bias toward basic and acidic residues; that stretch reads KAREFNRNQRKDSE. Phosphoserine is present on residues S59, S335, and S339. The disordered stretch occupies residues 336–423; that stretch reads PPASASDLIE…DRLTCPKGLP (88 aa). The span at 356–377 shows a compositional bias: basic and acidic residues; that stretch reads KALIKQDNLDAFNERDPYKADD. The segment covering 378 to 391 has biased composition (acidic residues); sequence SREEEEENDDDNSL. The residue at position 788 (S788) is a Phosphoserine. The tract at residues 796–837 is required for STRIPAK core complex formation; the sequence is DNCLQSVLGQRVDLPEDFQMNYDLWLEREVFSKPISWEELLQ.

This sequence belongs to the STRIP family. Part of the core of STRIPAK complexes composed of PP2A catalytic and scaffolding subunits, the striatins (PP2A regulatory subunits), the striatin-associated proteins MOB4, STRIP1 and STRIP2, PDCD10 and members of the STE20 kinases, such as STK24 and STK26. The STRIPAK complex can be extended by adapter proteins such as SLMAP:SIKE1, CTTNBP2 or CTTNBP2NL. Interacts with CDC42BPB. Interacts with CTTNBP2NL.

Its subcellular location is the cytoplasm. Plays a role in the regulation of cell morphology and cytoskeletal organization. Required in the cortical actin filament dynamics and cell shape. Part of the striatin-interacting phosphatase and kinase (STRIPAK) complexes. STRIPAK complexes have critical roles in protein (de)phosphorylation and are regulators of multiple signaling pathways including Hippo, MAPK, nuclear receptor and cytoskeleton remodeling. Different types of STRIPAK complexes are involved in a variety of biological processes such as cell growth, differentiation, apoptosis, metabolism and immune regulation. The protein is Striatin-interacting protein 1 (STRIP1) of Bos taurus (Bovine).